Here is a 431-residue protein sequence, read N- to C-terminus: Elongation factor 1-gamma (431 aa).

A GST N-terminal domain is found at 2–84; it reads VKGTLYTYPE…LLANEQLRGG (83 aa). One can recognise a GST C-terminal domain in the interval 86–212; it reads CPFVQAQVQQ…YKLCEKALVF (127 aa). Residues 223-261 form a disordered region; it reads KTGAAKPQQQAQQQKQEKKPKEKKEAPKKAAEPAEELDA. Over residues 226–236 the composition is skewed to low complexity; that stretch reads AAKPQQQAQQQ. Over residues 237–254 the composition is skewed to basic and acidic residues; it reads KQEKKPKEKKEAPKKAAE. The region spanning 272-431 is the EF-1-gamma C-terminal domain; that stretch reads SKDPFDALPK…RKFNQGKIFK (160 aa). Ser-294 bears the Phosphoserine mark.

Interacts with microtubules. May interact with BicDR; the interaction is probably indirect. Interacts (via C-terminus) with Doa; the interaction is probably direct, is transient and leads to phosphorylation of eEF1gamma by Doa. EF-1 is composed of four subunits: alpha, beta, delta, and gamma. Post-translationally, phosphorylated on Ser-294 by LAMMER kinases, including Doa. Phosphorylation on Ser-294 by Doa is required for negative regulation of microtubule-based transport.

The protein resides in the cytoplasm. The protein localises to the nucleus. It localises to the cytoskeleton. In terms of biological role, microtubule binding protein involved in regulation of microtubule-based transport. Probably plays a role in anchoring the EF-1 complex to other cellular components. Probably involved in formation and/or development of mechanosensory organs during metamorphosis. Required for cellular and organismal viability. Not essential for the innate immune response to bacterial infection. This Drosophila melanogaster (Fruit fly) protein is Elongation factor 1-gamma.